The following is a 385-amino-acid chain: S-adenosylmethionine synthase (385 aa).

His-16 is a binding site for ATP. Position 18 (Asp-18) interacts with Mg(2+). A K(+)-binding site is contributed by Glu-44. Residues Glu-57 and Gln-100 each contribute to the L-methionine site. The interval 100–110 (QSPDINQGVDR) is flexible loop. ATP is bound by residues 164–166 (DGK), 230–231 (KF), Asp-239, 245–246 (RK), Ala-262, and Lys-266. Asp-239 contributes to the L-methionine binding site. Lys-270 serves as a coordination point for L-methionine.

This sequence belongs to the AdoMet synthase family. Homotetramer; dimer of dimers. Mg(2+) serves as cofactor. K(+) is required as a cofactor.

It localises to the cytoplasm. It carries out the reaction L-methionine + ATP + H2O = S-adenosyl-L-methionine + phosphate + diphosphate. It functions in the pathway amino-acid biosynthesis; S-adenosyl-L-methionine biosynthesis; S-adenosyl-L-methionine from L-methionine: step 1/1. Functionally, catalyzes the formation of S-adenosylmethionine (AdoMet) from methionine and ATP. The overall synthetic reaction is composed of two sequential steps, AdoMet formation and the subsequent tripolyphosphate hydrolysis which occurs prior to release of AdoMet from the enzyme. The chain is S-adenosylmethionine synthase from Helicobacter pylori (strain J99 / ATCC 700824) (Campylobacter pylori J99).